The primary structure comprises 216 residues: DNA replication complex GINS protein PSF3 (216 aa).

The interval 1 to 16 is not essential for folding and stability of GINS complex, but may regulate accessibility to the central complex pore; sequence MSEAYFPVESGALGPE.

Belongs to the GINS3/PSF3 family. Component of the GINS complex which is a heterotetramer of GINS1, GINS2, GINS3 and GINS4. Forms a stable subcomplex with GINS2. GINS complex interacts with DNA primase in vitro. Component of the CMG helicase complex, a hexameric ring of related MCM2-7 subunits stabilized by CDC45 and the tetrameric GINS complex.

It localises to the nucleus. It is found in the chromosome. Its function is as follows. Required for correct functioning of the GINS complex, a complex that plays an essential role in the initiation of DNA replication, and progression of DNA replication forks. GINS complex is a core component of CDC45-MCM-GINS (CMG) helicase, the molecular machine that unwinds template DNA during replication, and around which the replisome is built. This is DNA replication complex GINS protein PSF3 (Gins3) from Mus musculus (Mouse).